A 283-amino-acid chain; its full sequence is MRGGWGRFPPKSREVAAISGKHKPKLGQNFLVSEAACRSIVEALGNLGARTVVEIGPGKGAITELLANRAERLIAIELDRELAPRLRERFARRETVTVIEDDVLRVDLSALARPGEKLLVVGNLPYYMTSEILLHLIRHEAAIERAVVMVQREVADRVAAGPGSRDYGLLSVTAQLHARVEKLLTLPPGAFSPPPEVYSTVLRWTMHSRTDELGVDPTRFTGFLRSCFAQKRKTLGNNLRAAKYEPAAIAGAMQSAGVAAGVRAEELSLEALAALWRTLEDRS.

The S-adenosyl-L-methionine site is built by Asn29, Leu31, Gly56, Glu77, Asp102, and Asn123.

It belongs to the class I-like SAM-binding methyltransferase superfamily. rRNA adenine N(6)-methyltransferase family. RsmA subfamily.

The protein localises to the cytoplasm. It carries out the reaction adenosine(1518)/adenosine(1519) in 16S rRNA + 4 S-adenosyl-L-methionine = N(6)-dimethyladenosine(1518)/N(6)-dimethyladenosine(1519) in 16S rRNA + 4 S-adenosyl-L-homocysteine + 4 H(+). Specifically dimethylates two adjacent adenosines (A1518 and A1519) in the loop of a conserved hairpin near the 3'-end of 16S rRNA in the 30S particle. May play a critical role in biogenesis of 30S subunits. The sequence is that of Ribosomal RNA small subunit methyltransferase A from Acidobacterium capsulatum (strain ATCC 51196 / DSM 11244 / BCRC 80197 / JCM 7670 / NBRC 15755 / NCIMB 13165 / 161).